The chain runs to 62 residues: Large ribosomal subunit protein bL32 (62 aa).

The span at 1–19 (MAVPKRKTSKTRRDKRRAS) shows a compositional bias: basic residues. The interval 1 to 20 (MAVPKRKTSKTRRDKRRASS) is disordered.

Belongs to the bacterial ribosomal protein bL32 family.

In Finegoldia magna (strain ATCC 29328 / DSM 20472 / WAL 2508) (Peptostreptococcus magnus), this protein is Large ribosomal subunit protein bL32.